A 555-amino-acid polypeptide reads, in one-letter code: Bifunctional epoxide hydrolase 2 (555 aa).

The segment at methionine 1–threonine 224 is phosphatase. Positions 9 and 11 each coordinate Mg(2+). An N6-acetyllysine modification is found at lysine 43. Residue threonine 123–asparagine 124 coordinates phosphate. Residue aspartate 185 coordinates Mg(2+). 2 positions are modified to N6-acetyllysine: lysine 191 and lysine 215. Residues serine 235–leucine 555 form an epoxide hydrolase region. Residues proline 259–proline 531 enclose the AB hydrolase-1 domain. Aspartate 335 (nucleophile) is an active-site residue. At serine 370 the chain carries Phosphoserine. Tyrosine 383 contributes to the substrate binding site. At lysine 455 the chain carries N6-succinyllysine. Tyrosine 466 serves as the catalytic Proton donor. N6-succinyllysine is present on lysine 505. Cysteine 522 carries S-(15-deoxy-Delta12,14-prostaglandin J2-9-yl)cysteine lipidation. Histidine 524 acts as the Proton acceptor in catalysis. A Microbody targeting signal motif is present at residues serine 553–leucine 555. The residue at position 554 (lysine 554) is an N6-succinyllysine.

The protein belongs to the AB hydrolase superfamily. Epoxide hydrolase family. As to quaternary structure, homodimer. The cofactor is Mg(2+). Post-translationally, the covalent modification of cysteine by 15-deoxy-Delta12,14-prostaglandin-J2 is autocatalytic and reversible. It may occur as an alternative to other cysteine modifications, such as S-nitrosylation and S-palmitoylation.

The protein localises to the cytoplasm. Its subcellular location is the peroxisome. It catalyses the reaction an epoxide + H2O = an ethanediol. The catalysed reaction is (9S,10S)-10-hydroxy-9-(phosphooxy)octadecanoate + H2O = (9S,10S)-9,10-dihydroxyoctadecanoate + phosphate. It carries out the reaction (14R,15S)-epoxy-(5Z,8Z,11Z)-eicosatrienoate + H2O = (14R,15R)-dihydroxy-(5Z,8Z,11Z)-eicosatrienoate. With respect to regulation, inhibited by 1-(1-acetylpiperidin-4-yl)-3-(4-(trifl uoromethoxy)phenyl)urea (TPAU), 1-cyclohexyl-3-dodecylurea (CDU), 12-(3-adamantan-1-yl-ureido)-dodecanoic acid (AUDA), 1-((3S, 5S, 7S)-adamantan-1-yl)-3-(5-(2-(2-ethoxyethoxy) ethoxy)pentyl)urea (AEPU), N-adamantyl-N[']-cyclohexyl urea (ACU), 4-(((1S, 4S)-4-(3-((3S, 5S, 7S)-adamantan-1-yl) ureido)cyclohexyl)oxy)benzoic acid (c-AUCB), 4-(((1R, 4R)-4-(3-((3S, 5S, 7S)-adamantan-1-yl)ureido)cyclohexyl)oxy)benzoic acid (t-AUCB), 4-(((1R, 4R)-4-(3-(4(trifluoromethoxy)phenyl)ureido)cyclohexyl)oxy)benzoic acid (t-TAUCB) and to a lesser extent by 8-(3-((3S, 5S, 7S)-adamantan-1-yl)ureido) octanoic acid (AUOA). Its function is as follows. Bifunctional enzyme. The C-terminal domain has epoxide hydrolase activity and acts on epoxides (alkene oxides, oxiranes) and arene oxides. Plays a role in xenobiotic metabolism by degrading potentially toxic epoxides. Also determines steady-state levels of physiological mediators. The N-terminal domain has lipid phosphatase activity, with the highest activity towards threo-9,10-phosphonooxy-hydroxy-octadecanoic acid, followed by erythro-9,10-phosphonooxy-hydroxy-octadecanoic acid, 12-phosphonooxy-octadec-9Z-enoic acid and 12-phosphonooxy-octadec-9E-enoic acid. The chain is Bifunctional epoxide hydrolase 2 (EPHX2) from Sus scrofa (Pig).